The primary structure comprises 2171 residues: DExH-box ATP-dependent RNA helicase DExH12 (2171 aa).

3 disordered regions span residues 24–80, 218–267, and 383–426; these read SLVL…KERD, EENE…NEGT, and TAKE…ESGW. Basic and acidic residues-rich tracts occupy residues 31-40 and 50-80; these read NRPRDTHEPT and IDPR…KERD. Residues 218–242 show a composition bias toward acidic residues; that stretch reads EENEEDDEESDPDMVEEDDDEEDDE. Over residues 383-423 the composition is skewed to basic and acidic residues; sequence TAKEREENLQKSINEEARRLKDETGGDGGRGRRDVADRDSE. Residues 514-697 form the Helicase ATP-binding 1 domain; it reads DTALFKAENI…FLRVDLKKGL (184 aa). 527 to 534 is an ATP binding site; the sequence is APTGAGKT. The DEIH box motif lies at 639 to 642; sequence DEIH. The Helicase C-terminal 1 domain occupies 731-941; it reads LCYQKVLAGA…GTVQNAREAC (211 aa). One can recognise an SEC63 1 domain in the interval 1006–1308; sequence TDLGRIASYY…WLGSETVLPV (303 aa). Residues 1360–1537 enclose the Helicase ATP-binding 2 domain; sequence TVLYNTNDNV…WIGASSHGLF (178 aa). An ATP-binding site is contributed by 1373-1380; the sequence is APTGSGKT. The DELH box motif lies at 1479 to 1482; the sequence is DELH. The Helicase C-terminal 2 domain occupies 1574-1779; it reads AIVQHAKNKK…GVIENKQDAV (206 aa). An SEC63 2 domain is found at 1839 to 2157; it reads PLNLGMIASY…LGCDQEYSFS (319 aa).

It belongs to the DExH box helicase family. Interacts with CLO.

The protein resides in the nucleus. The enzyme catalyses ATP + H2O = ADP + phosphate + H(+). RNA helicase that plays an essential role in pre-mRNA splicing as component of the U5 snRNP and U4/U6-U5 tri-snRNP complexes. Involved in spliceosome assembly, activation and disassembly. In Arabidopsis thaliana (Mouse-ear cress), this protein is DExH-box ATP-dependent RNA helicase DExH12.